Consider the following 201-residue polypeptide: Ribosome maturation factor RimP (201 aa).

Belongs to the RimP family.

The protein localises to the cytoplasm. Required for maturation of 30S ribosomal subunits. The sequence is that of Ribosome maturation factor RimP from Rhizobium johnstonii (strain DSM 114642 / LMG 32736 / 3841) (Rhizobium leguminosarum bv. viciae).